Reading from the N-terminus, the 208-residue chain is MWTFGRRAAAGLLPRTASRASAWVRNPRGRERIGTCGRRGLHVTANADAIRHSHLNLHYLGQILNIKKQSVCVVHLRNSGTLGNPSSLDETAYERLAEETLDALAEFFEDLADKPYTLKDYDVSFGDGVLTIKLGGDLGTYVINKQTPLLYLWFSGPCSGPKRYDWTGKNWVYSHDGVSLHELLARELTEALNTKLDLSSLAYSGKGT.

The transit peptide at 1–40 (MWTFGRRAAAGLLPRTASRASAWVRNPRGRERIGTCGRRG) directs the protein to the mitochondrion.

This sequence belongs to the frataxin family. Component of the mitochondrial core iron-sulfur cluster (ISC) complex composed of NFS1, LYRM4, NDUFAB1, ISCU, FXN, and FDX2; this complex is a heterohexamer containing two copies of each monomer. Homodimer. Monomer (probable predominant form). Oligomer. Monomers and polymeric aggregates of &gt;1 MDa have been isolated from mitochondria. A small fraction of heterologous overexpressed recombinant frataxin forms high-molecular weight aggregates that incorporate iron. Interacts with LYRM4. Interacts (via ferrous form) with ISCU; the interaction is possible when both are bound to the dimeric form of the cysteine desulfurase complex (NFS1:LYRM4) and the interaction enhances FXN interaction to the dimeric form of the cysteine desulfurase complex (NFS1:LYRM4). Interacts with FECH; one iron-bound FXN monomer seems to interact with a FECH homodimer. Interacts with SDHA and SDHB. Interacts with ACO2; the interaction is dependent on citrate. Interacts with HSPA9. In terms of assembly, interacts with ACO1. Interacts with ISCU (cytoplasmic form). Post-translationally, processed in two steps by mitochondrial processing peptidase (MPP). MPP first cleaves the precursor to intermediate form and subsequently converts the intermediate to yield frataxin mature form (frataxin(81-210)) which is the predominant form. The additional forms, frataxin(56-210) and frataxin(78-210), seem to be produced when the normal maturation process is impaired; their physiological relevance is unsure.

It localises to the mitochondrion. It is found in the cytoplasm. The protein resides in the cytosol. It carries out the reaction 4 Fe(2+) + O2 + 4 H(+) = 4 Fe(3+) + 2 H2O. Its function is as follows. Functions as an activator of persulfide transfer to the scaffoding protein ISCU as component of the core iron-sulfur cluster (ISC) assembly complex and participates to the [2Fe-2S] cluster assembly. Accelerates sulfur transfer from NFS1 persulfide intermediate to ISCU and to small thiols such as L-cysteine and glutathione leading to persulfuration of these thiols and ultimately sulfide release. Binds ferrous ion and is released from FXN upon the addition of both L-cysteine and reduced FDX2 during [2Fe-2S] cluster assembly. The core iron-sulfur cluster (ISC) assembly complex is involved in the de novo synthesis of a [2Fe-2S] cluster, the first step of the mitochondrial iron-sulfur protein biogenesis. This process is initiated by the cysteine desulfurase complex (NFS1:LYRM4:NDUFAB1) that produces persulfide which is delivered on the scaffold protein ISCU in a FXN-dependent manner. Then this complex is stabilized by FDX2 which provides reducing equivalents to accomplish the [2Fe-2S] cluster assembly. Finally, the [2Fe-2S] cluster is transferred from ISCU to chaperone proteins, including HSCB, HSPA9 and GLRX5. May play a role in the protection against iron-catalyzed oxidative stress through its ability to catalyze the oxidation of Fe(2+) to Fe(3+); the oligomeric form but not the monomeric form has in vitro ferroxidase activity. May be able to store large amounts of iron in the form of a ferrihydrite mineral by oligomerization; however, the physiological relevance is unsure as reports are conflicting and the function has only been shown using heterologous overexpression systems. May function as an iron chaperone protein that protects the aconitase [4Fe-4S]2+ cluster from disassembly and promotes enzyme reactivation. May play a role as a high affinity iron binding partner for FECH that is capable of both delivering iron to ferrochelatase and mediating the terminal step in mitochondrial heme biosynthesis. Modulates the RNA-binding activity of ACO1. May be involved in the cytoplasmic iron-sulfur protein biogenesis. May contribute to oxidative stress resistance and overall cell survival. The sequence is that of Frataxin, mitochondrial from Rattus norvegicus (Rat).